Here is a 203-residue protein sequence, read N- to C-terminus: Proline-rich protein 1 (203 aa).

An N-terminal signal peptide occupies residues 1 to 20; it reads MMKLGLYLTLLFLSVWTVSG.

Component of the acid-insoluble and acid-soluble organic matrix of calcified layers of the shell (at protein level).

The protein resides in the secreted. This chain is Proline-rich protein 1, found in Lottia gigantea (Giant owl limpet).